The sequence spans 266 residues: Non-structural maintenance of chromosomes element 1 homolog (266 aa).

Residues 1-102 are interaction with NSMCE3; that stretch reads MQGSTRRMSV…SISKMATDFA (102 aa). The RING-type; atypical zinc finger occupies 191–232; sequence CNICHSLLIQGQSCETCGIRMHLPCVAKYFQSNAEPRCPHCN. The segment at 245-266 is disordered; sequence PEKERESGVSKSNKKSLRSRQH. A Phosphoserine modification is found at Ser-251. Residues 256 to 266 are compositionally biased toward basic residues; the sequence is SNKKSLRSRQH.

Belongs to the NSE1 family. As to quaternary structure, component of the SMC5-SMC6 complex which consists at least of SMC5, SMC6, NSMCE2, NSMCE1, NSMCE4A or EID3 and NSMCE3. NSMCE1, NSMCE4A or EID3 and NSMCE3 probably form a subcomplex that bridges the head domains of the SMC5-SMC6 heterodimer. Interacts with NSMCE3. Ubiquitinated.

It is found in the nucleus. The protein localises to the chromosome. The protein resides in the telomere. The enzyme catalyses S-ubiquitinyl-[E2 ubiquitin-conjugating enzyme]-L-cysteine + [acceptor protein]-L-lysine = [E2 ubiquitin-conjugating enzyme]-L-cysteine + N(6)-ubiquitinyl-[acceptor protein]-L-lysine.. RING-type zinc finger-containing E3 ubiquitin ligase that assembles with melanoma antigen protein (MAGE) to catalyze the direct transfer of ubiquitin from E2 ubiquitin-conjugating enzyme to a specific substrate. Within MAGE-RING ubiquitin ligase complex, MAGE stimulates and specifies ubiquitin ligase activity likely through recruitment and/or stabilization of the E2 ubiquitin-conjugating enzyme at the E3:substrate complex. Involved in maintenance of genome integrity, DNA damage response and DNA repair. NSMCE3/MAGEG1 and NSMCE1 ubiquitin ligase are components of SMC5-SMC6 complex and may positively regulate homologous recombination-mediated DNA repair. This is Non-structural maintenance of chromosomes element 1 homolog (NSMCE1) from Pongo abelii (Sumatran orangutan).